Reading from the N-terminus, the 418-residue chain is Serine--tRNA ligase (418 aa).

An L-serine-binding site is contributed by 231 to 233 (TAE). Residue 262–264 (RSE) participates in ATP binding. Glutamate 285 contacts L-serine. 349–352 (EISS) serves as a coordination point for ATP. Serine 385 contributes to the L-serine binding site.

This sequence belongs to the class-II aminoacyl-tRNA synthetase family. Type-1 seryl-tRNA synthetase subfamily. As to quaternary structure, homodimer. The tRNA molecule binds across the dimer.

The protein localises to the cytoplasm. The catalysed reaction is tRNA(Ser) + L-serine + ATP = L-seryl-tRNA(Ser) + AMP + diphosphate + H(+). It carries out the reaction tRNA(Sec) + L-serine + ATP = L-seryl-tRNA(Sec) + AMP + diphosphate + H(+). It functions in the pathway aminoacyl-tRNA biosynthesis; selenocysteinyl-tRNA(Sec) biosynthesis; L-seryl-tRNA(Sec) from L-serine and tRNA(Sec): step 1/1. In terms of biological role, catalyzes the attachment of serine to tRNA(Ser). Is also able to aminoacylate tRNA(Sec) with serine, to form the misacylated tRNA L-seryl-tRNA(Sec), which will be further converted into selenocysteinyl-tRNA(Sec). The polypeptide is Serine--tRNA ligase (Ureaplasma urealyticum serovar 10 (strain ATCC 33699 / Western)).